A 331-amino-acid chain; its full sequence is Tetraacyldisaccharide 4'-kinase (331 aa).

59–66 (FVGGTGKT) contacts ATP.

It belongs to the LpxK family.

It carries out the reaction a lipid A disaccharide + ATP = a lipid IVA + ADP + H(+). Its pathway is glycolipid biosynthesis; lipid IV(A) biosynthesis; lipid IV(A) from (3R)-3-hydroxytetradecanoyl-[acyl-carrier-protein] and UDP-N-acetyl-alpha-D-glucosamine: step 6/6. Functionally, transfers the gamma-phosphate of ATP to the 4'-position of a tetraacyldisaccharide 1-phosphate intermediate (termed DS-1-P) to form tetraacyldisaccharide 1,4'-bis-phosphate (lipid IVA). This chain is Tetraacyldisaccharide 4'-kinase, found in Alkalilimnicola ehrlichii (strain ATCC BAA-1101 / DSM 17681 / MLHE-1).